A 470-amino-acid chain; its full sequence is Neuraminidase (470 aa).

The Intravirion portion of the chain corresponds to 1-14; that stretch reads MNPNQKIITIGSVS. The tract at residues 11–32 is involved in apical transport and lipid raft association; it reads GSVSLGLVVLNILLHIVSITIT. A helical transmembrane segment spans residues 15 to 35; that stretch reads LGLVVLNILLHIVSITITVLV. Positions 32-86 are hypervariable stalk region; it reads TVLVLPGNGNSGNCNETIIREYNETVRIEKVTQRHNTNVIEYIERPESDHFMNNT. At 36-470 the chain is on the virion surface side; that stretch reads LPGNGNSGNC…AILPFDIDKM (435 aa). N-linked (GlcNAc...) asparagine; by host glycosylation is found at N46, N54, and N84. A head of neuraminidase region spans residues 89 to 470; that stretch reads LCDAKGFAPF…AILPFDIDKM (382 aa). Disulfide bonds link C90–C417, C122–C127, C182–C229, C231–C236, C277–C290, C279–C288, C316–C335, and C421–C446. R116 contacts substrate. N-linked (GlcNAc...) asparagine; by host glycosylation occurs at N144. D149 serves as the catalytic Proton donor/acceptor. Substrate is bound at residue R150. 275–276 serves as a coordination point for substrate; it reads EE. Position 291 (R291) interacts with substrate. Position 292 (D292) interacts with Ca(2+). Residue N293 is glycosylated (N-linked (GlcNAc...) asparagine; by host). Ca(2+)-binding residues include G296 and D322. R368 is a substrate binding site. N398 carries N-linked (GlcNAc...) asparagine; by host glycosylation. Catalysis depends on Y402, which acts as the Nucleophile.

This sequence belongs to the glycosyl hydrolase 34 family. As to quaternary structure, homotetramer. Ca(2+) serves as cofactor. N-glycosylated.

The protein resides in the virion membrane. It localises to the host apical cell membrane. It carries out the reaction Hydrolysis of alpha-(2-&gt;3)-, alpha-(2-&gt;6)-, alpha-(2-&gt;8)- glycosidic linkages of terminal sialic acid residues in oligosaccharides, glycoproteins, glycolipids, colominic acid and synthetic substrates.. With respect to regulation, inhibited by the neuraminidase inhibitors zanamivir (Relenza) and oseltamivir (Tamiflu). These drugs interfere with the release of progeny virus from infected cells and are effective against all influenza strains. Resistance to neuraminidase inhibitors is quite rare. Its function is as follows. Catalyzes the removal of terminal sialic acid residues from viral and cellular glycoconjugates. Cleaves off the terminal sialic acids on the glycosylated HA during virus budding to facilitate virus release. Additionally helps virus spread through the circulation by further removing sialic acids from the cell surface. These cleavages prevent self-aggregation and ensure the efficient spread of the progeny virus from cell to cell. Otherwise, infection would be limited to one round of replication. Described as a receptor-destroying enzyme because it cleaves a terminal sialic acid from the cellular receptors. May facilitate viral invasion of the upper airways by cleaving the sialic acid moieties on the mucin of the airway epithelial cells. Likely to plays a role in the budding process through its association with lipid rafts during intracellular transport. May additionally display a raft-association independent effect on budding. Plays a role in the determination of host range restriction on replication and virulence. Sialidase activity in late endosome/lysosome traffic seems to enhance virus replication. The polypeptide is Neuraminidase (Influenza A virus (strain A/Turkey/Minnesota/501/1978 H6N8)).